The primary structure comprises 302 residues: Probable movement protein 4b (302 aa).

Its function is as follows. Transports viral genome to neighboring plant cells directly through plasmosdesmata, without any budding. The movement protein allows efficient cell to cell propagation, by bypassing the host cell wall barrier. The sequence is that of Probable movement protein 4b (4b) from Embergeria (Garden lettuce).